We begin with the raw amino-acid sequence, 166 residues long: Phosphopantetheine adenylyltransferase (166 aa).

Position 9 (T9) interacts with substrate. ATP contacts are provided by residues 9 to 10 (TF) and H17. 3 residues coordinate substrate: K41, L73, and R87. ATP contacts are provided by residues 88–90 (GLR), E98, and 123–129 (YQFISGT).

Belongs to the bacterial CoaD family. In terms of assembly, homohexamer. It depends on Mg(2+) as a cofactor.

Its subcellular location is the cytoplasm. It carries out the reaction (R)-4'-phosphopantetheine + ATP + H(+) = 3'-dephospho-CoA + diphosphate. It functions in the pathway cofactor biosynthesis; coenzyme A biosynthesis; CoA from (R)-pantothenate: step 4/5. Its function is as follows. Reversibly transfers an adenylyl group from ATP to 4'-phosphopantetheine, yielding dephospho-CoA (dPCoA) and pyrophosphate. The polypeptide is Phosphopantetheine adenylyltransferase (Burkholderia mallei (strain NCTC 10229)).